Reading from the N-terminus, the 209-residue chain is Eukaryotic translation initiation factor isoform 4E-2 (209 aa).

Residues Met-1–Ala-29 form a disordered region. Residues Pro-9–Ala-29 show a composition bias toward low complexity. MRNA is bound by residues Pro-51–Gly-56, Lys-83, and Trp-101–Glu-102. The cysteines at positions 106 and 145 are disulfide-linked. MRNA is bound by residues Arg-152 to Lys-157 and Arg-197 to Lys-200.

Belongs to the eukaryotic initiation factor 4E family. EIF4F is a multi-subunit complex, the composition of which varies with external and internal environmental conditions. It is composed of at least EIF4A, EIF4E and EIF4G. EIF4E is also known to interact with other partners. In higher plants two isoforms of EIF4F have been identified, named isoform EIF4F and isoform EIF(iso)4F. Isoform EIF4F has subunits p220 and p26, whereas isoform EIF(iso)4F has subunits p82 and p28. According to the redox status, the Cys-106-Cys-145 disulfide bridge may have a role in regulating protein function by affecting its ability to bind capped mRNA.

The protein resides in the cytoplasm. Its subcellular location is the nucleus. In terms of biological role, component of the protein complex eIF4F, which is involved in the recognition of the mRNA cap, ATP-dependent unwinding of 5'-terminal secondary structure and recruitment of mRNA to the ribosome. Recognizes and binds the 7-methylguanosine-containing mRNA cap during an early step in the initiation of protein synthesis and facilitates ribosome binding by inducing the unwinding of the mRNAs secondary structures. This Triticum aestivum (Wheat) protein is Eukaryotic translation initiation factor isoform 4E-2.